The primary structure comprises 100 residues: NADH-quinone oxidoreductase subunit K (100 aa).

3 helical membrane-spanning segments follow: residues 4–24, 28–48, and 60–80; these read LSHG…GMII, LLFM…AFVV, and VMYI…LALL.

Belongs to the complex I subunit 4L family. In terms of assembly, NDH-1 is composed of 13 different subunits. Subunits NuoA, H, J, K, L, M, N constitute the membrane sector of the complex.

The protein resides in the cell inner membrane. It carries out the reaction a quinone + NADH + 5 H(+)(in) = a quinol + NAD(+) + 4 H(+)(out). Functionally, NDH-1 shuttles electrons from NADH, via FMN and iron-sulfur (Fe-S) centers, to quinones in the respiratory chain. The immediate electron acceptor for the enzyme in this species is believed to be ubiquinone. Couples the redox reaction to proton translocation (for every two electrons transferred, four hydrogen ions are translocated across the cytoplasmic membrane), and thus conserves the redox energy in a proton gradient. The polypeptide is NADH-quinone oxidoreductase subunit K (Sodalis glossinidius (strain morsitans)).